The primary structure comprises 1171 residues: Kinesin-like protein GA13060 (1171 aa).

Positions 1–24 (MASSISRNGGFCGALQRAPPPMPP) are disordered. The Kinesin motor domain maps to 40 to 400 (KVKVMLRVSD…IQIASRIHRL (361 aa)). Disordered regions lie at residues 737–774 (LLGQDMSLPPDGDEDQDSGPSEVPPALPLFDDPLGSRD), 798–820 (LVASRASSSHHQHQHHRPSSQRS), 932–955 (PAYRLTPSPPKQPSHSPSQGSLPS), 1043–1099 (TSSE…QRHR), and 1124–1143 (RHSHGVGGHKKHRHRHEGNG). Over residues 805–816 (SSHHQHQHHRPS) the composition is skewed to basic residues. Residues 1043-1059 (TSSEAYDSGHDSNSTPR) are compositionally biased toward polar residues. Over residues 1124–1139 (RHSHGVGGHKKHRHRH) the composition is skewed to basic residues.

Belongs to the TRAFAC class myosin-kinesin ATPase superfamily. Kinesin family. KIF26 subfamily.

The protein localises to the cytoplasm. The protein resides in the cytoskeleton. The protein is Kinesin-like protein GA13060 of Drosophila pseudoobscura pseudoobscura (Fruit fly).